The chain runs to 315 residues: Methionyl-tRNA formyltransferase (315 aa).

113–116 (SLLP) contacts (6S)-5,6,7,8-tetrahydrofolate.

The protein belongs to the Fmt family.

The catalysed reaction is L-methionyl-tRNA(fMet) + (6R)-10-formyltetrahydrofolate = N-formyl-L-methionyl-tRNA(fMet) + (6S)-5,6,7,8-tetrahydrofolate + H(+). Attaches a formyl group to the free amino group of methionyl-tRNA(fMet). The formyl group appears to play a dual role in the initiator identity of N-formylmethionyl-tRNA by promoting its recognition by IF2 and preventing the misappropriation of this tRNA by the elongation apparatus. In Enterobacter sp. (strain 638), this protein is Methionyl-tRNA formyltransferase.